Reading from the N-terminus, the 228-residue chain is Core-capsid bridging protein (228 aa).

The disordered stretch occupies residues 146 to 177 (ARPPAARISPPRRRRRRRRSPRPRATAAYRSS). The segment covering 155-167 (PPRRRRRRRRSPR) has biased composition (basic residues). The segment covering 168–177 (PRATAAYRSS) has biased composition (low complexity).

Belongs to the adenoviridae core-capsid bridging protein family. As to quaternary structure, monomer. Homodimer. Exists in equilibrium between monomers and dimers in solution. Interacts with the histone-like nucleoprotein; this interactions bridge the virus core to the capsid. Interacts with core protein X; this interactions bridge the virus core to the capsid. Interacts with the endosome lysis protein VI; this interactions bridge the virus core to the capsid. Interacts with the peripentonal hexons. Interacts with host NPM1; this interaction might play a role in virus assembly.

Its subcellular location is the virion. The protein localises to the host nucleus. It localises to the host nucleolus. Its function is as follows. Associates loosely with the viral DNA to form an outer shell around the nucleoprotein-DNA complex and links it with the capsid by binding the endosome lysis protein. Dissociates from the viral genome during entry. Might be involved in nuclear capsid assembly of the viral particles through its association with NPM1/nucleophosmin. The chain is Core-capsid bridging protein from Murine adenovirus A serotype 1 (MAdV-1).